Consider the following 135-residue polypeptide: Large ribosomal subunit protein uL16c (135 aa).

This sequence belongs to the universal ribosomal protein uL16 family. As to quaternary structure, part of the 50S ribosomal subunit.

The protein localises to the plastid. Its subcellular location is the chloroplast. In Lotus japonicus (Lotus corniculatus var. japonicus), this protein is Large ribosomal subunit protein uL16c.